A 623-amino-acid polypeptide reads, in one-letter code: DNA mismatch repair protein MutL (623 aa).

The segment covering 353 to 368 (AQQSAPRPANSYSPAS) has biased composition (polar residues). Residues 353–389 (AQQSAPRPANSYSPASWRTAPPAPRSEWSPQTAQTAH) form a disordered region.

The protein belongs to the DNA mismatch repair MutL/HexB family.

In terms of biological role, this protein is involved in the repair of mismatches in DNA. It is required for dam-dependent methyl-directed DNA mismatch repair. May act as a 'molecular matchmaker', a protein that promotes the formation of a stable complex between two or more DNA-binding proteins in an ATP-dependent manner without itself being part of a final effector complex. The chain is DNA mismatch repair protein MutL from Brucella melitensis biotype 2 (strain ATCC 23457).